Consider the following 789-residue polypeptide: Trimethylamine-oxide aldolase (789 aa).

This sequence in the C-terminal section; belongs to the GcvT family.

The catalysed reaction is trimethylamine N-oxide + H(+) = dimethylamine + formaldehyde. Its function is as follows. Catalyzes the conversion of trimethylamine N-oxide (TMAO) to dimethylamine (DMA) and formaldehyde. This chain is Trimethylamine-oxide aldolase, found in Ruegeria pomeroyi (strain ATCC 700808 / DSM 15171 / DSS-3) (Silicibacter pomeroyi).